A 132-amino-acid polypeptide reads, in one-letter code: Small ribosomal subunit protein uS8c (132 aa).

This sequence belongs to the universal ribosomal protein uS8 family. Part of the 30S ribosomal subunit.

It localises to the plastid. Its subcellular location is the chloroplast. Functionally, one of the primary rRNA binding proteins, it binds directly to 16S rRNA central domain where it helps coordinate assembly of the platform of the 30S subunit. This Phaeodactylum tricornutum (strain CCAP 1055/1) protein is Small ribosomal subunit protein uS8c (rps8).